Consider the following 172-residue polypeptide: Adrenodoxin-like protein 1, mitochondrial (172 aa).

Residues 57-159 form the 2Fe-2S ferredoxin-type domain; sequence VNITYVDKDG…GMELELPKAT (103 aa). Positions 94, 100, 103, and 140 each coordinate [2Fe-2S] cluster.

This sequence belongs to the adrenodoxin/putidaredoxin family. Requires [2Fe-2S] cluster as cofactor.

The protein localises to the mitochondrion matrix. Required for ecdysteroidogenesis in the prothoracic gland which is necessary for larval to pupal transition. This is Adrenodoxin-like protein 1, mitochondrial from Drosophila melanogaster (Fruit fly).